Here is an 846-residue protein sequence, read N- to C-terminus: Penicillin G acylase (846 aa).

Positions 1–26 are cleaved as a signal peptide; the sequence is MKNRNRMIVNCVTASLMYYWSLPALA. E178 is a Ca(2+) binding site. The propeptide at 236–289 is spacer peptide; it reads ALLPRYDLPAPMLDRPAKGADGALLALTAGKNRETIAAQFAQGGANGLAGYPTT. The Nucleophile role is filled by S290. Ca(2+) is bound by residues D362, V364, D365, P494, and D541.

The protein belongs to the peptidase S45 family. In terms of assembly, heterodimer of an alpha subunit and a beta subunit processed from the same precursor. It depends on Ca(2+) as a cofactor.

Its subcellular location is the periplasm. The catalysed reaction is a penicillin + H2O = 6-aminopenicillanate + a carboxylate. The polypeptide is Penicillin G acylase (pac) (Escherichia coli).